The sequence spans 198 residues: Dual specificity protein phosphatase 14 (198 aa).

Positions Gly26–Gly167 constitute a Tyrosine-protein phosphatase domain. Cys111 (phosphocysteine intermediate) is an active-site residue.

This sequence belongs to the protein-tyrosine phosphatase family. Non-receptor class dual specificity subfamily. As to quaternary structure, interacts with CD28.

The enzyme catalyses O-phospho-L-tyrosyl-[protein] + H2O = L-tyrosyl-[protein] + phosphate. It carries out the reaction O-phospho-L-seryl-[protein] + H2O = L-seryl-[protein] + phosphate. It catalyses the reaction O-phospho-L-threonyl-[protein] + H2O = L-threonyl-[protein] + phosphate. Involved in the inactivation of MAP kinases. Dephosphorylates ERK, JNK and p38 MAP-kinases. Plays a negative role in TCR signaling by dephosphorylating MAP3K7 adapter TAB1 leading to its inactivation. The polypeptide is Dual specificity protein phosphatase 14 (DUSP14) (Bos taurus (Bovine)).